Here is a 359-residue protein sequence, read N- to C-terminus: Photosystem II protein D1 1 (359 aa).

The next 3 membrane-spanning stretches (helical) occupy residues 29-46 (YVGW…AATI), 118-133 (HFLI…EWEL), and 142-156 (WICV…AASA). Histidine 118 serves as a coordination point for chlorophyll a. Position 126 (tyrosine 126) interacts with pheophytin a. 2 residues coordinate [CaMn4O5] cluster: aspartate 170 and glutamate 189. A helical membrane pass occupies residues 197–218 (FHMLGVAGVFGGSLFSAMHGSL). Histidine 198 serves as a coordination point for chlorophyll a. A quinone-binding positions include histidine 215 and 264-265 (SF). Residue histidine 215 coordinates Fe cation. Residue histidine 272 coordinates Fe cation. Residues 274–288 (FLAAWPVVGIWFTAL) form a helical membrane-spanning segment. The [CaMn4O5] cluster site is built by histidine 332, glutamate 333, aspartate 342, and alanine 344. A propeptide spanning residues 345–359 (AAESTPVALQAPAIG) is cleaved from the precursor.

This sequence belongs to the reaction center PufL/M/PsbA/D family. As to quaternary structure, PSII is composed of 1 copy each of membrane proteins PsbA, PsbB, PsbC, PsbD, PsbE, PsbF, PsbH, PsbI, PsbJ, PsbK, PsbL, PsbM, PsbT, PsbX, PsbY, PsbZ, Psb30/Ycf12, peripheral proteins PsbO, CyanoQ (PsbQ), PsbU, PsbV and a large number of cofactors. It forms dimeric complexes. The cofactor is The D1/D2 heterodimer binds P680, chlorophylls that are the primary electron donor of PSII, and subsequent electron acceptors. It shares a non-heme iron and each subunit binds pheophytin, quinone, additional chlorophylls, carotenoids and lipids. D1 provides most of the ligands for the Mn4-Ca-O5 cluster of the oxygen-evolving complex (OEC). There is also a Cl(-1) ion associated with D1 and D2, which is required for oxygen evolution. The PSII complex binds additional chlorophylls, carotenoids and specific lipids.. In terms of processing, tyr-161 forms a radical intermediate that is referred to as redox-active TyrZ, YZ or Y-Z. Post-translationally, C-terminally processed by CtpA; processing is essential to allow assembly of the oxygen-evolving complex and thus photosynthetic growth.

It localises to the cellular thylakoid membrane. The enzyme catalyses 2 a plastoquinone + 4 hnu + 2 H2O = 2 a plastoquinol + O2. Functionally, photosystem II (PSII) is a light-driven water:plastoquinone oxidoreductase that uses light energy to abstract electrons from H(2)O, generating O(2) and a proton gradient subsequently used for ATP formation. It consists of a core antenna complex that captures photons, and an electron transfer chain that converts photonic excitation into a charge separation. The D1/D2 (PsbA/PsbD) reaction center heterodimer binds P680, the primary electron donor of PSII as well as several subsequent electron acceptors. The protein is Photosystem II protein D1 1 of Synechococcus sp. (strain CC9605).